We begin with the raw amino-acid sequence, 763 residues long: Protein CHROMATIN REMODELING 19 (763 aa).

Disordered stretches follow at residues 1–43 (MKRD…TPSI) and 114–149 (EDEE…RGED). A compositionally biased stretch (basic residues) spans 23–34 (VLKRPRTPKKTR). The span at 114-135 (EDEEASDDDDDEAESSASEDEF) shows a compositional bias: acidic residues. The Helicase ATP-binding domain maps to 226–404 (LLYKKGIEGA…WSLLEFMLPD (179 aa)). Residue 239 to 246 (DEMGLGKT) participates in ATP binding. The short motif at 353-356 (DEAH) is the DEAH box element. The stretch at 462–482 (RKQEDAYKEAIEEYRAASQAR) forms a coiled coil. Positions 520–527 (IRRIYSDE) match the Nuclear localization signal motif. A Helicase C-terminal domain is found at 592 to 742 (TLAELLPSMK…AAVLESGVHV (151 aa)).

It belongs to the SNF2/RAD54 helicase family. In terms of assembly, interacts with SUVR2 and itself.

The protein localises to the nucleus. DNA helicase that possesses intrinsic ATP-dependent nucleosome-remodeling activity and is both required for DNA repair and heterochromatin organization. Promotes DNA end resection of double-strand breaks (DSBs) following DNA damage: probably acts by weakening histone DNA interactions in nucleosomes flanking DSBs. Probable chromatin remodeling factor. Probable helicase-like transcription factor involved in transcriptional gene silencing. Associates with SUVR2 and contributes to transcriptional gene silencing at RNA-directed DNA methylation (RdDM) target loci but also at RdDM-independent target loci. May be involved in nucleosome positioning to form ordered nucleosome arrays on chromatin. In Arabidopsis thaliana (Mouse-ear cress), this protein is Protein CHROMATIN REMODELING 19.